A 343-amino-acid chain; its full sequence is MTVEVEAVTMAKEEQPEEEEVIEKLVEKITGLAAAIGKLPSLSPSPEVNALFTELVMTCIPPSSVDVEQLGAEAQDMRGRLIRLCADAEGHLEAHYSDVLAAHDNPLDHLALFPYFNNYIQLAQLEYALLARHLPAAPPPSRLAFLGSGPLPLSSLVLAARHLPAASFHNYDICADANRRASRLVRADRDLSARMAFHTSDVAHVTTDLAAYDVVFLAALVGMAAEEKARMVEHLGKHMAPGAALVVRSAHGARGFLYPVVDPEEIRRGGFDVLAVHHPEGEVINSVIIARKPPVAAPALEGGDAHAHGHGAVVSRPCQRCEMEARAHQKMEDMSAMEKLPSS.

The protein belongs to the nicotianamine synthase (NAS)-like family. Expressed in leaves.

The catalysed reaction is 3 S-adenosyl-L-methionine = nicotianamine + 3 S-methyl-5'-thioadenosine + 3 H(+). Its function is as follows. Synthesizes nicotianamine, a polyamine that is the first intermediate in the synthesis of the phytosiderophores of the mugineic acid type found in gramineae which serve as a sensor for the physiological iron status within the plant, and/or might be involved in the transport of iron. The sequence is that of Nicotianamine synthase 3 (NAS3) from Oryza sativa subsp. indica (Rice).